A 77-amino-acid polypeptide reads, in one-letter code: U14-theraphotoxin-Cg1a 1 (77 aa).

Positions 1–21 (MKTSVLLVILGIAAITVQCTA) are cleaved as a signal peptide. The propeptide occupies 22–49 (SESVEQDSLRTFVDAVLGWNAEMASEAR). Intrachain disulfides connect Cys50-Cys64, Cys57-Cys69, and Cys63-Cys75. Lys77 bears the Lysine amide mark.

It belongs to the neurotoxin 10 (Hwtx-1) family. 65 (Jztx-21) subfamily. As to expression, expressed by the venom gland.

The protein resides in the secreted. Its function is as follows. Probable ion channel inhibitor. In Chilobrachys guangxiensis (Chinese earth tiger tarantula), this protein is U14-theraphotoxin-Cg1a 1.